Consider the following 750-residue polypeptide: Olfactomedin-like protein 2B (750 aa).

Positions 1 to 22 (MAKPRLLVLYFALIVVPAWVSS) are cleaved as a signal peptide. Coiled-coil stretches lie at residues 40 to 68 (AEDE…KVKA) and 179 to 213 (KLEE…GKEN). N-linked (GlcNAc...) asparagine glycans are attached at residues asparagine 187 and asparagine 213. Disordered regions lie at residues 346 to 437 (TRRP…PPAV) and 452 to 484 (VPPT…PEEE). Polar residues-rich tracts occupy residues 354-384 (QGHS…SDPS) and 393-413 (PTLQ…LQPS). Over residues 416–430 (VPATTVAHTATQQPA) the composition is skewed to low complexity. Residues 493 to 750 (RCKDTLSTIT…QVTYHVIFAY (258 aa)) form the Olfactomedin-like domain. A disulfide bridge connects residues cysteine 494 and cysteine 680. A glycan (N-linked (GlcNAc...) asparagine) is linked at asparagine 695.

Homodimer. Binds to heparin and chondroitin sulfate E. O-glycosylated and N-glycosylated.

The protein resides in the secreted. The polypeptide is Olfactomedin-like protein 2B (OLFML2B) (Homo sapiens (Human)).